A 316-amino-acid chain; its full sequence is FAD:protein FMN transferase (316 aa).

Residues Met14, 88–90 (AFN), and Asp146 each bind FAD. Ala149 is a Mg(2+) binding site. Residues Lys152 and Leu231 each contribute to the FAD site. Residues Asp257 and Thr261 each coordinate Mg(2+).

This sequence belongs to the ApbE family. It depends on Mg(2+) as a cofactor.

Its subcellular location is the cytoplasm. The enzyme catalyses L-threonyl-[protein] + FAD = FMN-L-threonyl-[protein] + AMP + H(+). Flavin transferase that catalyzes the transfer of the FMN moiety of FAD and its covalent binding to the hydroxyl group of a threonine residue in a target flavoprotein. Is responsible for the modification of the fumarate reductase KPK_2907. The sequence is that of FAD:protein FMN transferase from Klebsiella pneumoniae (strain 342).